A 287-amino-acid polypeptide reads, in one-letter code: tRNA selenocysteine 1-associated protein 1 (287 aa).

RRM domains follow at residues 3–86 (ASLW…YATY) and 96–175 (YSLF…VAIP).

It belongs to the RRM TRSPAP family. In terms of assembly, component of the tRNA(Sec) complex composed at least of EEFSEC, SECISBP2, SEPHS1, SEPSECS, TRNAU1AP and tRNA(Sec). Found in a complex with tRNA(Sec). Interacts with SEPSECS. Associates with mRNP and/or polysomes. Found in a complex with EEFSEC, SECISBP2, TRNAU1AP and tRNA(Sec).

The protein localises to the nucleus. It localises to the cytoplasm. Functionally, involved in the early steps of selenocysteine biosynthesis and tRNA(Sec) charging to the later steps resulting in the cotranslational incorporation of selenocysteine into selenoproteins. Stabilizes the SECISBP2, EEFSEC and tRNA(Sec) complex. May be involved in the methylation of tRNA(Sec). Enhances efficiency of selenoproteins synthesis. The sequence is that of tRNA selenocysteine 1-associated protein 1 (TRNAU1AP) from Bos taurus (Bovine).